Consider the following 520-residue polypeptide: Maturase K (520 aa).

The protein belongs to the intron maturase 2 family. MatK subfamily.

Its subcellular location is the plastid. The protein localises to the chloroplast. Functionally, usually encoded in the trnK tRNA gene intron. Probably assists in splicing its own and other chloroplast group II introns. The protein is Maturase K of Aspidistra elatior (Cast-iron plant).